The sequence spans 432 residues: ATP-dependent RNA helicase RhlB (432 aa).

Residues 9–37 (QNFADLGLQPQVIDGLNAKGFIKCTPIQA) carry the Q motif motif. The Helicase ATP-binding domain maps to 40–219 (LPVLLAGQDI…FEHMQEPEHV (180 aa)). 53 to 60 (AQTGTGKT) provides a ligand contact to ATP. Residues 165 to 168 (DEAD) carry the DEAD box motif. The 146-residue stretch at 245–390 (ALLQTLIEEE…QSDYDASALL (146 aa)) folds into the Helicase C-terminal domain. Positions 397 to 432 (LRLQRRPQQNRRNNNGQRQGGNRKHSRPRQPRNTQS) are disordered. Positions 417-426 (GNRKHSRPRQ) are enriched in basic residues.

This sequence belongs to the DEAD box helicase family. RhlB subfamily. Component of the RNA degradosome, which is a multiprotein complex involved in RNA processing and mRNA degradation.

The protein resides in the cytoplasm. The catalysed reaction is ATP + H2O = ADP + phosphate + H(+). In terms of biological role, DEAD-box RNA helicase involved in RNA degradation. Has RNA-dependent ATPase activity and unwinds double-stranded RNA. This is ATP-dependent RNA helicase RhlB from Aliivibrio fischeri (strain MJ11) (Vibrio fischeri).